The following is a 422-amino-acid chain: 5-hydroxytryptamine receptor 1A (422 aa).

The segment at 1-23 (MDVLSPGQGNNTTSPPAPFETGG) is disordered. At 1–38 (MDVLSPGQGNNTTSPPAPFETGGNTTGISDVTFSYQVI) the chain is on the extracellular side. N-linked (GlcNAc...) asparagine glycans are attached at residues asparagine 10, asparagine 11, and asparagine 24. A helical transmembrane segment spans residues 39–59 (TSLLLGTLIFCAVLGNACVVA). Over 60-73 (AIALERSLQNVANY) the chain is Cytoplasmic. The helical transmembrane segment at 74–98 (LIGSLAVTDLMVSVLVLPMAALYQV) threads the bilayer. At 99 to 107 (LNKWTLGQV) the chain is on the extracellular side. A helical transmembrane segment spans residues 108–132 (TCDLFIALDVLCCTSSILHLCAIAL). Cysteine 109 and cysteine 187 are joined by a disulfide. Residues aspartate 116 and cysteine 120 each contribute to the serotonin site. Positions 133-135 (DRY) match the DRY motif; important for ligand-induced conformation changes motif. The Cytoplasmic segment spans residues 133–152 (DRYWAITDPIDYVNKRTPRR). Residues 153–174 (AAALISLTWLIGFLISIPPMLG) form a helical membrane-spanning segment. Over 175–193 (WRTPEDRSDPDACTISKDH) the chain is Extracellular. Residues 194–216 (GYTIYSTFGAFYIPLLLMLVLYG) traverse the membrane as a helical segment. Over 217–346 (RIFRAARFRI…LARERKTVKT (130 aa)) the chain is Cytoplasmic. Positions 235–263 (KTGADTHHGASPAPQPKKSVNGESGSRNW) are disordered. Residues threonine 314, lysine 345, threonine 346, and glycine 352 each coordinate 1D-myo-inositol 4-phosphate. A helical membrane pass occupies residues 347–370 (LGIIMGTFILCWLPFFIVALVLPF). Residues 371-378 (CESSCHMP) are Extracellular-facing. Residues 379-403 (TLLGAIINWLGYSNSLLNPVIYAYF) traverse the membrane as a helical segment. Residues 396-400 (NPVIY) carry the NPxxY motif; important for ligand-induced conformation changes and signaling motif. Residues phenylalanine 403, asparagine 404, and lysine 405 each contribute to the 1D-myo-inositol 4-phosphate site. Residues 404-422 (NKDFQNAFKKIIKCKFCRQ) lie on the Cytoplasmic side of the membrane.

It belongs to the G-protein coupled receptor 1 family. 5-hydroxytryptamine receptor subfamily. HTR1A sub-subfamily. As to quaternary structure, heterodimer; heterodimerizes with GPER1. Interacts with YIF1B. Interacts with GPR39 and GALR1.

The protein resides in the cell membrane. Its subcellular location is the cell projection. It localises to the dendrite. With respect to regulation, G-protein coupled receptor activity is regulated by lipids: phosphatidylinositol 4-phosphate increases HTR1A-mediated activity. In terms of biological role, G-protein coupled receptor for 5-hydroxytryptamine (serotonin). Also functions as a receptor for various drugs and psychoactive substances. Ligand binding causes a conformation change that triggers signaling via guanine nucleotide-binding proteins (G proteins) and modulates the activity of downstream effectors, such as adenylate cyclase. HTR1A is coupled to G(i)/G(o) G alpha proteins and mediates inhibitory neurotransmission: signaling inhibits adenylate cyclase activity and activates a phosphatidylinositol-calcium second messenger system that regulates the release of Ca(2+) ions from intracellular stores. Beta-arrestin family members regulate signaling by mediating both receptor desensitization and resensitization processes. The polypeptide is 5-hydroxytryptamine receptor 1A (HTR1A) (Pongo pygmaeus (Bornean orangutan)).